A 254-amino-acid chain; its full sequence is tRNA threonylcarbamoyladenosine dehydratase (254 aa).

Belongs to the HesA/MoeB/ThiF family.

In terms of biological role, catalyzes the ATP-dependent dehydration of threonylcarbamoyladenosine at position 37 (t(6)A37) to form cyclic t(6)A37 (ct(6)A37) in tRNAs that read codons beginning with adenine. This chain is tRNA threonylcarbamoyladenosine dehydratase (tcdA), found in Bacillus subtilis (strain 168).